A 47-amino-acid chain; its full sequence is Photosystem II reaction center protein K (47 aa).

The propeptide occupies 1–10 (MNIGFDMILA). A helical membrane pass occupies residues 22 to 42 (LVDVLPVIPLLFLLLAFVWQA).

It belongs to the PsbK family. PSII is composed of 1 copy each of membrane proteins PsbA, PsbB, PsbC, PsbD, PsbE, PsbF, PsbH, PsbI, PsbJ, PsbK, PsbL, PsbM, PsbT, PsbX, PsbY, PsbZ, Psb30/Ycf12, at least 3 peripheral proteins of the oxygen-evolving complex and a large number of cofactors. It forms dimeric complexes.

The protein localises to the plastid. The protein resides in the chloroplast thylakoid membrane. In terms of biological role, one of the components of the core complex of photosystem II (PSII). PSII is a light-driven water:plastoquinone oxidoreductase that uses light energy to abstract electrons from H(2)O, generating O(2) and a proton gradient subsequently used for ATP formation. It consists of a core antenna complex that captures photons, and an electron transfer chain that converts photonic excitation into a charge separation. The protein is Photosystem II reaction center protein K of Mesostigma viride (Green alga).